The sequence spans 122 residues: Proximal tubules-expressed gene protein (122 aa).

Residues 33–53 traverse the membrane as a helical segment; the sequence is WLTGLIAMTVFLFLVLVVYVA.

It belongs to the PDZK1-interacting protein 1/SMIM24 family. As to expression, expressed in prospective pronephric mesoderm at the late gastrula stage. After neurulation, expressed in the intermediate mesoderm, eye placode and blood islands. Expression becomes restricted to the pronephric proximal tubule during embryogenesis, but is absent from the connecting tubules.

It localises to the membrane. Functionally, essential for pronephric tubule development, acting upstream of pax8 and lhx1/lim1 and downstream of retinoic acid signaling to induce pronephric mesoderm to form pronephric tubule-specific cells. The protein is Proximal tubules-expressed gene protein (pteg) of Xenopus laevis (African clawed frog).